The following is a 298-amino-acid chain: Beta-1,3-galactosyltransferase 5 (298 aa).

Residues 1–7 (MAFPKMR) lie on the Cytoplasmic side of the membrane. A helical; Signal-anchor for type II membrane protein transmembrane segment spans residues 8–28 (LMYICLLVLGALCLYFSMYSL). Residues 29-298 (NPFKEQSFVY…PRTLLDYWQA (270 aa)) lie on the Lumenal side of the membrane. 3 N-linked (GlcNAc...) asparagine glycosylation sites follow: asparagine 130, asparagine 174, and asparagine 231.

The protein belongs to the glycosyltransferase 31 family.

It is found in the golgi apparatus membrane. The catalysed reaction is a globoside Gb4Cer (d18:1(4E)) + UDP-alpha-D-galactose = a globoside GalGb4Cer (d18:1(4E)) + UDP + H(+). The protein operates within protein modification; protein glycosylation. Its function is as follows. Catalyzes the transfer of Gal to GlcNAc-based acceptors with a preference for the core3 O-linked glycan GlcNAc(beta1,3)GalNAc structure. Can use glycolipid LC3Cer as an efficient acceptor. The sequence is that of Beta-1,3-galactosyltransferase 5 (B3GALT5) from Gorilla gorilla gorilla (Western lowland gorilla).